Consider the following 291-residue polypeptide: Early E4 34 kDa protein (291 aa).

The protein belongs to the adenoviridae E4 30 to 34 kDa protein family. In terms of assembly, interacts with E1B-55k.

The protein resides in the host nucleus. It is found in the host cytoplasm. Plays a major role to prevent cellular inhibition of viral genome replication by nuclear bodies. Assembles an SCF-like E3 ubiquitin ligase complex based on the cellular proteins ELOB, ELOC, CUL5 and RBX1, in cooperation with viral E1B-55K. This viral RING-type ligase ubiquitinates cellular substrates prior to proteasomal degradation: p53/TP53, LIG4, MRE11-RAD50-NBS1 (MRN) complex, ITGA3, DAXX and BLM. In Homo sapiens (Human), this protein is Early E4 34 kDa protein.